A 245-amino-acid polypeptide reads, in one-letter code: MTKIFAHRGFKGNYPENTMIAFEHALHSGADGIELDVQLTKDGRLAVIHDEKLNRTTNMKGLVKDYTYEELKRGDASHSFYEETGAVTIPLLEEVLELVTQRSSFMINIELKNSIYRYPGIEEKVKEQIEHFQIEDRVLVSSFHHGSLALFHKLMPHIELAVLTMDVIHQPDMYLKTIPAKGYHPNIKGAGVTKEVVSALHADQQVIRPFTVNSEKQIKNMLTLGVDGIFTDFPDRAVKIREEMK.

Residues Thr-2 to Arg-241 form the GP-PDE domain. Catalysis depends on His-7, which acts as the Proton acceptor. Residues Glu-34 and Asp-36 each contribute to the a divalent metal cation site. His-49 (proton donor) is an active-site residue. Glu-110 contacts a divalent metal cation.

It belongs to the glycerophosphoryl diester phosphodiesterase family. It depends on Ni(2+) as a cofactor. Co(2+) is required as a cofactor. Mn(2+) serves as cofactor.

It catalyses the reaction a sn-glycero-3-phosphodiester + H2O = an alcohol + sn-glycerol 3-phosphate + H(+). Inhibited by EDTA and various organic solvents such as chloroform, toluene or benzene. Glycerophosphodiester phosphodiesterase hydrolyzes glycerophosphodiesters into glycerol-3-phosphate (G3P) and the corresponding alcohol. Can hydrolyze the model substrate bis-(p-nitrophenyl phosphate) (bis(pNPP)) to p-nitrophenol. Can also catalyze the degradation of diphenyl phosphate (DPHP) to phenyl phosphate (PHP). DPHP is an aryl phosphate ester used as a chemical additive and an industrial catalyst that can easily spread to the environment and exhibits toxicity toward organisms. The sequence is that of Glycerophosphodiester phosphodiesterase from Bacillus altitudinis.